The sequence spans 605 residues: DNA primase (605 aa).

The segment at 38–62 (CPFHDEKTPSFTVSEDKQICHCFGC) adopts a CHC2-type zinc-finger fold. The Toprim domain occupies 260–341 (DEIVLLEGFM…NVFVIQLPSG (82 aa)). The Mg(2+) site is built by Glu-266, Asp-310, and Asp-312.

This sequence belongs to the DnaG primase family. Monomer. Interacts with DnaB. Zn(2+) serves as cofactor. Mg(2+) is required as a cofactor.

It carries out the reaction ssDNA + n NTP = ssDNA/pppN(pN)n-1 hybrid + (n-1) diphosphate.. Its function is as follows. RNA polymerase that catalyzes the synthesis of short RNA molecules used as primers for DNA polymerase during DNA replication. The chain is DNA primase from Staphylococcus aureus (strain MSSA476).